We begin with the raw amino-acid sequence, 561 residues long: Urocanate hydratase (561 aa).

NAD(+) contacts are provided by residues 52 to 53 (GG), Q130, 176 to 178 (GMG), E196, R201, 242 to 243 (NA), 263 to 267 (QTSAH), 273 to 274 (YL), and Y322. C410 is an active-site residue. G492 contacts NAD(+).

Belongs to the urocanase family. NAD(+) is required as a cofactor.

The protein resides in the cytoplasm. It catalyses the reaction 4-imidazolone-5-propanoate = trans-urocanate + H2O. Its pathway is amino-acid degradation; L-histidine degradation into L-glutamate; N-formimidoyl-L-glutamate from L-histidine: step 2/3. Functionally, catalyzes the conversion of urocanate to 4-imidazolone-5-propionate. The sequence is that of Urocanate hydratase from Enterobacter sp. (strain 638).